A 939-amino-acid polypeptide reads, in one-letter code: Zinc finger RNA-binding protein 2 (939 aa).

Disordered regions lie at residues 1-72, 116-185, 217-264, 289-314, 360-389, 401-449, 545-590, and 906-939; these read MATS…AYGS, GRMT…IVTS, FYPP…PKAG, HLGGQKHRKKEAAQKTGVQPNGSPRG, LEPALATESPPGAEAKPTSPTGPSVCASSR, ALCE…DAQP, RLEE…SSDD, and RLGARFRKRQRGPGEGEEGAGEKKRGRRGGEGLV. 2 stretches are compositionally biased toward polar residues: residues 137-147 and 157-184; these read PHGSHSHAQPP and QPASTLSSGYTYPTATGVQPESSASIVT. Over residues 217 to 239 the composition is skewed to pro residues; it reads FYPPAQPPPPPGPPQQLPPPPAP. Positions 516-549 form a coiled coil; sequence KVLEERMRKQRHLAEERLEQLRRWHAERRRLEEE. Residues 570–935 enclose the DZF domain; sequence RPESPASAPL…GEKKRGRRGG (366 aa). Basic residues predominate over residues 906 to 916; it reads RLGARFRKRQR.

This Homo sapiens (Human) protein is Zinc finger RNA-binding protein 2 (ZFR2).